The sequence spans 625 residues: Probable potassium transport system protein Kup 2 (625 aa).

Helical transmembrane passes span 10-30, 47-67, 104-124, 140-160, 172-192, 214-234, 250-270, 283-303, 347-367, 369-389, 396-416, and 422-442; these read LAAL…TSPL, GVHL…VVTL, VLLL…VITP, PAFK…LFAV, FGPV…AEII, GWHM…VEAL, WLGL…ALLM, LFPQ…TVIA, WLLL…SALA, AYGI…FFVV, PLPV…LLVV, and FFQG…VMAT.

It belongs to the HAK/KUP transporter (TC 2.A.72) family.

It is found in the cell inner membrane. The catalysed reaction is K(+)(in) + H(+)(in) = K(+)(out) + H(+)(out). Its function is as follows. Transport of potassium into the cell. Likely operates as a K(+):H(+) symporter. The chain is Probable potassium transport system protein Kup 2 from Albidiferax ferrireducens (strain ATCC BAA-621 / DSM 15236 / T118) (Rhodoferax ferrireducens).